A 318-amino-acid chain; its full sequence is Cyclic AMP receptor-like protein F (318 aa).

Residues 1–3 (MKD) lie on the Extracellular side of the membrane. The chain crosses the membrane as a helical span at residues 4-24 (IILIYMICAPISMIGSLFIII). The Cytoplasmic segment spans residues 25 to 38 (TWLLYAKLKNSGSN). Residues 39 to 59 (FIFFQAISDFFFTSKYIITII) traverse the membrane as a helical segment. Topologically, residues 60–83 (FYYINIPQFSDETSSTDTNPYCFS) are extracellular. Cys-81 and Cys-177 are disulfide-bonded. The helical transmembrane segment at 84-104 (LGLFSQFFGQATIMWSYTMTV) threads the bilayer. The Cytoplasmic segment spans residues 105-145 (KVFHSYFEMKKKNNNNNIGSNNIGGGGGGNNSNKQNSIDKT). Residues 146–166 (LKWYHLFVWGFCLVNATIIGI) form a helical membrane-spanning segment. Residues 167-187 (SKQYGPSSTGCWIVGANNPYR) lie on the Extracellular side of the membrane. The chain crosses the membrane as a helical span at residues 188–208 (FFELVPLYFTITTSIIILILI). At 209–234 (LVKMKKSKPSSLLPTESMRYNQQARE) the chain is on the cytoplasmic side. A helical membrane pass occupies residues 235–255 (FKIQLMKFVLIFIIFWLPATV). Residues 256–267 (LRTLEYFGIEKT) are Extracellular-facing. A helical transmembrane segment spans residues 268 to 288 (FFILLDAVSVSLQALANSLVW). The Cytoplasmic segment spans residues 289–318 (ATSPQFLKLMKRKVVNKPNKQMEREYLINK).

Belongs to the G-protein coupled receptor 5 family.

It is found in the membrane. Functionally, receptor for cAMP. In Dictyostelium discoideum (Social amoeba), this protein is Cyclic AMP receptor-like protein F (crlF).